We begin with the raw amino-acid sequence, 366 residues long: Peptide chain release factor 2 (366 aa).

The residue at position 251 (Gln-251) is an N5-methylglutamine.

Belongs to the prokaryotic/mitochondrial release factor family. Post-translationally, methylated by PrmC. Methylation increases the termination efficiency of RF2.

It is found in the cytoplasm. Peptide chain release factor 2 directs the termination of translation in response to the peptide chain termination codons UGA and UAA. The sequence is that of Peptide chain release factor 2 (prfB) from Bacillus subtilis (strain 168).